The following is a 398-amino-acid chain: Probable pectate lyase P56 (398 aa).

A signal peptide spans 1 to 27 (MEYSYRTKINVLFIVLILFVFAALGTA). Asn-135 carries N-linked (GlcNAc...) asparagine glycosylation. Residues Asp-192, Asp-217, and Asp-221 each contribute to the Ca(2+) site. Residue Asn-228 is glycosylated (N-linked (GlcNAc...) asparagine). The active site involves Arg-273.

Belongs to the polysaccharide lyase 1 family. Requires Ca(2+) as cofactor. Expressed in anthers and pollen.

It catalyses the reaction Eliminative cleavage of (1-&gt;4)-alpha-D-galacturonan to give oligosaccharides with 4-deoxy-alpha-D-galact-4-enuronosyl groups at their non-reducing ends.. It participates in glycan metabolism; pectin degradation; 2-dehydro-3-deoxy-D-gluconate from pectin: step 2/5. Might be needed during pollen development and tube growth. This chain is Probable pectate lyase P56 (LAT56), found in Solanum lycopersicum (Tomato).